Reading from the N-terminus, the 1004-residue chain is Lon protease homolog 2, peroxisomal (1004 aa).

A Lon N-terminal domain is found at 15–296 (FPCYLLETGT…TFVRHMQQLL (282 aa)). Positions 340 to 374 (KRNKPESGPGGRSRRLLPRPASGNSAAAGEEDDSE) are disordered. Over residues 357–367 (PRPASGNSAAA) the composition is skewed to low complexity. Position 519 to 526 (519 to 526 (GPPGVGKT)) interacts with ATP. The Lon proteolytic domain maps to 773 to 987 (AEKYGVVHGL…RDLVLHAWPT (215 aa)). Active-site residues include S872 and K915. Positions 1002 to 1004 (PQL) match the Microbody targeting signal motif.

It belongs to the peptidase S16 family.

The protein resides in the peroxisome matrix. The enzyme catalyses Hydrolysis of proteins in presence of ATP.. Functionally, ATP-dependent serine protease that mediates the selective degradation of misfolded and unassembled polypeptides in the peroxisomal matrix. Necessary for type 2 peroxisome targeting signal (PTS2)-containing protein processing and facilitates peroxisome matrix protein import. The chain is Lon protease homolog 2, peroxisomal from Eremothecium gossypii (strain ATCC 10895 / CBS 109.51 / FGSC 9923 / NRRL Y-1056) (Yeast).